Consider the following 319-residue polypeptide: Protein-methionine-sulfoxide reductase catalytic subunit MsrP (319 aa).

A signal peptide (tat-type signal) is located at residues 1 to 40 (MHKLNENDVTPEHIFFERRKIIQSMGLMGAASLLPRFSLA). Mo-molybdopterin is bound by residues N73, 76–77 (YE), C131, T166, N218, R223, and 234–236 (NIK).

This sequence belongs to the MsrP family. Heterodimer of a catalytic subunit (MsrP) and a heme-binding subunit (MsrQ). Requires Mo-molybdopterin as cofactor. Post-translationally, predicted to be exported by the Tat system. The position of the signal peptide cleavage has not been experimentally proven.

It is found in the periplasm. It catalyses the reaction L-methionyl-[protein] + a quinone + H2O = L-methionyl-(S)-S-oxide-[protein] + a quinol. It carries out the reaction L-methionyl-[protein] + a quinone + H2O = L-methionyl-(R)-S-oxide-[protein] + a quinol. In terms of biological role, part of the MsrPQ system that repairs oxidized periplasmic proteins containing methionine sulfoxide residues (Met-O), using respiratory chain electrons. Thus protects these proteins from oxidative-stress damage caused by reactive species of oxygen and chlorine generated by the host defense mechanisms. MsrPQ is essential for the maintenance of envelope integrity under bleach stress, rescuing a wide series of structurally unrelated periplasmic proteins from methionine oxidation. The catalytic subunit MsrP is non-stereospecific, being able to reduce both (R-) and (S-) diastereoisomers of methionine sulfoxide. The sequence is that of Protein-methionine-sulfoxide reductase catalytic subunit MsrP from Pasteurella multocida (strain Pm70).